We begin with the raw amino-acid sequence, 574 residues long: Urease subunit alpha (574 aa).

The Urease domain maps to 131–574 (GAIDSHIHFI…LPMAQRYLLL (444 aa)). Ni(2+) contacts are provided by His136, His138, and Lys219. Position 219 is an N6-carboxylysine (Lys219). His221 contributes to the substrate binding site. Ni(2+) contacts are provided by His248 and His274. His322 (proton donor) is an active-site residue. Asp362 contacts Ni(2+). A disordered region spans residues 384-403 (KVQRGPLPEDAANPRGSRND).

Belongs to the metallo-dependent hydrolases superfamily. Urease alpha subunit family. Heterotrimer of UreA (gamma), UreB (beta) and UreC (alpha) subunits. Three heterotrimers associate to form the active enzyme. The cofactor is Ni cation. Post-translationally, carboxylation allows a single lysine to coordinate two nickel ions.

It is found in the cytoplasm. The catalysed reaction is urea + 2 H2O + H(+) = hydrogencarbonate + 2 NH4(+). The protein operates within nitrogen metabolism; urea degradation; CO(2) and NH(3) from urea (urease route): step 1/1. The protein is Urease subunit alpha of Prochlorococcus marinus (strain MIT 9313).